A 481-amino-acid polypeptide reads, in one-letter code: Chromosomal replication initiator protein DnaA (481 aa).

Residues 1 to 74 (MSQDLWSFCL…ELGAEFHGAP (74 aa)) form a domain I, interacts with DnaA modulators region. The interval 74–144 (PIEIELVLPA…TASDLAYEKT (71 aa)) is domain II. The segment at 101–123 (AGPAPAPTPSQAPAATAAAPAVV) is disordered. Low complexity predominate over residues 111-123 (QAPAATAAAPAVV). Residues 145–361 (RLNADFTFDT…GALNKVVAFA (217 aa)) are domain III, AAA+ region. ATP is bound by residues Gly189, Gly191, Lys192, and Thr193. The interval 362–481 (RFHGRGITLE…VHVLTQVLRG (120 aa)) is domain IV, binds dsDNA.

This sequence belongs to the DnaA family. Oligomerizes as a right-handed, spiral filament on DNA at oriC.

Its subcellular location is the cytoplasm. Plays an essential role in the initiation and regulation of chromosomal replication. ATP-DnaA binds to the origin of replication (oriC) to initiate formation of the DNA replication initiation complex once per cell cycle. Binds the DnaA box (a 9 base pair repeat at the origin) and separates the double-stranded (ds)DNA. Forms a right-handed helical filament on oriC DNA; dsDNA binds to the exterior of the filament while single-stranded (ss)DNA is stabiized in the filament's interior. The ATP-DnaA-oriC complex binds and stabilizes one strand of the AT-rich DNA unwinding element (DUE), permitting loading of DNA polymerase. After initiation quickly degrades to an ADP-DnaA complex that is not apt for DNA replication. Binds acidic phospholipids. The sequence is that of Chromosomal replication initiator protein DnaA from Aromatoleum aromaticum (strain DSM 19018 / LMG 30748 / EbN1) (Azoarcus sp. (strain EbN1)).